Reading from the N-terminus, the 1233-residue chain is Structural maintenance of chromosomes protein 1A (1233 aa).

32–39 (GPNGSGKS) provides a ligand contact to ATP. Coiled coils occupy residues 104 to 124 (EYKI…LEKL) and 163 to 503 (ELAQ…KAEI). Basic and acidic residues predominate over residues 284-293 (IKEKDSELNQ). 2 disordered regions span residues 284 to 308 (IKEK…TSHK) and 348 to 369 (QEFE…TLEE). 2 positions are modified to phosphoserine: Ser358 and Ser360. Residues 515 to 629 (VYGRLIDLCQ…DNVEDARRIA (115 aa)) form the SMC hinge domain. An N6-acetyllysine mark is found at Lys648 and Lys713. The stretch at 660–935 (KAKARRWDEK…RHNLLQACKM (276 aa)) forms a coiled coil. The tract at residues 947 to 968 (MDDISQEEGSSQGEDSVSGSQR) is disordered. Over residues 953-967 (EEGSSQGEDSVSGSQ) the composition is skewed to low complexity. 4 positions are modified to phosphoserine: Ser957, Ser962, Ser966, and Ser970. Residues 991 to 1068 (KDAQAEEEIK…FEQIKKERFD (78 aa)) are a coiled coil. N6-acetyllysine is present on Lys1037.

The protein belongs to the SMC family. SMC1 subfamily. As to quaternary structure, forms a heterodimer with SMC3 in cohesin complexes. Cohesin complexes are composed of the SMC1 (SMC1A or meiosis-specific SMC1B) and SMC3 heterodimer attached via their SMC hinge domain, RAD21 which link them, and one STAG protein (STAG1, STAG2 or meiosis-specific STAG3), which interacts with RAD21. In germ cell cohesin complexes, SMC1A is mutually exclusive with SMC1B. Found in a complex with CDCA5, SMC3 and RAD21, PDS5A/SCC-112 and PDS5B/APRIN. Interacts with NDC80, SYCP2, STAG3, BRCA1 and BRAT1. The cohesin complex interacts with the cohesin loading complex subunits NIPBL/Scc2 (via HEAT repeats) and MAU2/Scc4. NIPBL directly contacts all members of the complex, RAD21, SMC1A/B, SMC3 and STAG1. Interacts with RPGR. Found in a complex containing POLE and SMC3. Post-translationally, phosphorylated upon ionizing radiation or DNA methylation. Phosphorylation of Ser-957 and Ser-966 activates it and is required for S-phase checkpoint activation. In terms of processing, ubiquitinated by the DCX(DCAF15) complex, leading to its degradation.

The protein localises to the nucleus. It localises to the chromosome. Its subcellular location is the centromere. Functionally, involved in chromosome cohesion during cell cycle and in DNA repair. Involved in DNA repair via its interaction with BRCA1 and its related phosphorylation by ATM, and works as a downstream effector in the ATM/NBS1 branch of S-phase checkpoint. Central component of cohesin complex. The cohesin complex is required for the cohesion of sister chromatids after DNA replication. The cohesin complex apparently forms a large proteinaceous ring within which sister chromatids can be trapped. At anaphase, the complex is cleaved and dissociates from chromatin, allowing sister chromatids to segregate. The cohesin complex may also play a role in spindle pole assembly during mitosis. Involved in DNA repair via its interaction with BRCA1 and its related phosphorylation by ATM, or via its phosphorylation by ATR. Works as a downstream effector both in the ATM/NBS1 branch and in the ATR/MSH2 branch of S-phase checkpoint. This Bos taurus (Bovine) protein is Structural maintenance of chromosomes protein 1A (SMC1A).